The chain runs to 91 residues: Bacterial microcompartment shell protein PduJ (91 aa).

The BMC domain occupies 4-88; sequence ALGLVETKGL…PHSDVEAILP (85 aa).

The protein belongs to the bacterial microcompartments protein family. As to quaternary structure, homohexamer with a central pore. Interacts with PduP, which targets PduP to the BMC. Interacts with shell protein PduA.

The protein localises to the bacterial microcompartment. It functions in the pathway polyol metabolism; 1,2-propanediol degradation. Its function is as follows. One of the major shell proteins of the bacterial microcompartment (BMC) dedicated to 1,2-propanediol (1,2-PD) degradation. At least one of PduA or PduJ is required for BMC assembly; it must be encoded as the first gene in the pdu operon. Required for structural integrity of BMCs and to mitigate propionaldehyde toxicity, probably joins facets responsible for BMC closure. Probably the hub for binding multiple enzymes to the interior of the BMC. In terms of biological role, expression of a cosmid containing the full 21-gene pdu operon in E.coli allows E.coli to grow on 1,2-PD with the appearance of BMCs in its cytoplasm. Overexpression of this protein leads to an internal structure with a whorled architecture. Functionally, the 1,2-PD-specific bacterial microcompartment (BMC) concentrates low levels of 1,2-PD catabolic enzymes, concentrates volatile reaction intermediates thus enhancing pathway flux and keeps the level of toxic, mutagenic propionaldehyde low. This Citrobacter freundii protein is Bacterial microcompartment shell protein PduJ.